The chain runs to 410 residues: Argininosuccinate synthase (410 aa).

ATP is bound by residues 13-21 (AYSGGLDTS) and Ala-40. Tyr-91 and Ser-96 together coordinate L-citrulline. Gly-121 is an ATP binding site. Residues Thr-123, Asn-127, and Asp-128 each coordinate L-aspartate. Asn-127 is an L-citrulline binding site. L-citrulline-binding residues include Arg-131, Ser-182, Ser-191, Glu-267, and Tyr-279.

The protein belongs to the argininosuccinate synthase family. Type 1 subfamily. As to quaternary structure, homotetramer.

The protein resides in the cytoplasm. The catalysed reaction is L-citrulline + L-aspartate + ATP = 2-(N(omega)-L-arginino)succinate + AMP + diphosphate + H(+). It functions in the pathway amino-acid biosynthesis; L-arginine biosynthesis; L-arginine from L-ornithine and carbamoyl phosphate: step 2/3. This chain is Argininosuccinate synthase, found in Maricaulis maris (strain MCS10) (Caulobacter maris).